Here is a 97-residue protein sequence, read N- to C-terminus: UPF0235 protein cbdbA1230 (97 aa).

It belongs to the UPF0235 family.

The polypeptide is UPF0235 protein cbdbA1230 (Dehalococcoides mccartyi (strain CBDB1)).